A 647-amino-acid polypeptide reads, in one-letter code: Leucine-rich repeat and WD repeat-containing protein 1 (647 aa).

LRR repeat units lie at residues 22 to 43 (KIRSLDLSGLELLSEHLDPKLL), 48 to 69 (QLQELDLSNNHLETLPDNLGLS), 70 to 91 (HLRVLRCANNQLGDVTALCQFP), and 92 to 113 (KLEELSLEGNPFLTVNDNLKVS). The segment at 204–267 (RTQVQKANSP…GSPVAGSDGS (64 aa)) is disordered. Serine 212, serine 243, serine 251, serine 259, and serine 264 each carry phosphoserine. WD repeat units lie at residues 282–335 (HSKN…LHKY), 341–379 (EFFSVAWTALMVVTQAGHKKRWSVLAAAGLRGLVRLLHV), 383–422 (FCCGVIRAHKKAIATLCFSPAHETHLFTASYDKRIILWDI), 426–472 (NQDY…CWDV), 484–526 (EVEF…LWSW), 542–582 (VVLA…LYDV), and 598–646 (APTQ…IWGR).

It belongs to the LRWD1 family. As to quaternary structure, integral component of the ORC complex. Directly interacts with CDT1, GMNN and ORC2. Interacts with ORC2 only when non-ubiquitinated; this interaction prevents LRWD1 ubiquitination and degradation. Some of these interactions are regulated in a cell-cycle dependent manner. Interaction with ORC1 occurs predominantly during G1. Association with phosphorylated ORC1 during mitosis is not efficient. Interaction with CDT1 occurs during G1 phase, as well as during mitosis with phosphorylated CDT1. Interaction with GMNN occurs from G1/S to mitosis. Interaction with ORC2 is observed throughout the cell cycle. The stoichiometry of the ORCA/ORC/CDT1/GMNN complex is 1:1:1:2. Interacts with CUL4A and DDB1; this interaction may lead to ubiquitination. In terms of processing, ubiquitinated; undergoes 'Lys-48'-linked polyubiquitination leading to proteasomal degradation. Ubiquitination occurs within the WD repeats at the end of the G1 phase. Ubiquitination may be catalyzed by the CUL4-DDB1 E3 ubiquitin-protein ligase complex and other E3 ligases. In terms of tissue distribution, testis-specific. Drastically down-regulated in testis from patients with Sertoli cell-only syndrome (SCOS).

It is found in the nucleus. Its subcellular location is the chromosome. The protein localises to the centromere. The protein resides in the telomere. It localises to the cytoplasm. It is found in the cytoskeleton. Its subcellular location is the microtubule organizing center. The protein localises to the centrosome. The protein resides in the kinetochore. Functionally, required for G1/S transition. Recruits and stabilizes the origin recognition complex (ORC) onto chromatin during G1 to establish pre-replication complex (preRC) and to heterochromatic sites in post-replicated cells. Binds a combination of DNA and histone methylation repressive marks on heterochromatin. Binds histone H3 and H4 trimethylation marks H3K9me3, H3K27me3 and H4K20me3 in a cooperative manner with DNA methylation. Required for silencing of major satellite repeats. May be important ORC2, ORC3 and ORC4 stability. This is Leucine-rich repeat and WD repeat-containing protein 1 (LRWD1) from Homo sapiens (Human).